Here is a 1163-residue protein sequence, read N- to C-terminus: Carbamoyl phosphate synthase large chain (1163 aa).

The interval 1-456 (MPKRQDIKSI…SLQKALRGLE (456 aa)) is carboxyphosphate synthetic domain. Position 129 (R129) interacts with ATP. The disordered stretch occupies residues 148–170 (LANATDIKDHDRKSHEAERSALK). The span at 153 to 170 (DIKDHDRKSHEAERSALK) shows a compositional bias: basic and acidic residues. The ATP-grasp 1 domain maps to 185-381 (LENQWNLGEG…IAKIAAKLAV (197 aa)). Residues R222, G228, G229, E261, V263, E268, G294, V295, H296, Q338, and E352 each contribute to the ATP site. The Mg(2+) site is built by Q338, E352, and N354. 3 residues coordinate Mn(2+): Q338, E352, and N354. The interval 457–614 (TGLTGLDEIE…PFVGAARSEA (158 aa)) is oligomerization domain. The carbamoyl phosphate synthetic domain stretch occupies residues 615-1026 (QVSDRKKVVI…AFAKSQLGAG (412 aa)). In terms of domain architecture, ATP-grasp 2 spans 743–955 (QKLLMKLDLN…IAKIAARVMA (213 aa)). Residues R779, S839, L841, E846, G871, I872, H873, S874, Q914, and E926 each contribute to the ATP site. Residues Q914, E926, and N928 each contribute to the Mg(2+) site. The Mn(2+) site is built by Q914, E926, and N928. The MGS-like domain maps to 1027 to 1163 (VDLPRDGTVF…VRPLQSYFET (137 aa)). The tract at residues 1027 to 1163 (VDLPRDGTVF…VRPLQSYFET (137 aa)) is allosteric domain.

It belongs to the CarB family. Composed of two chains; the small (or glutamine) chain promotes the hydrolysis of glutamine to ammonia, which is used by the large (or ammonia) chain to synthesize carbamoyl phosphate. Tetramer of heterodimers (alpha,beta)4. The cofactor is Mg(2+). Mn(2+) serves as cofactor.

It catalyses the reaction hydrogencarbonate + L-glutamine + 2 ATP + H2O = carbamoyl phosphate + L-glutamate + 2 ADP + phosphate + 2 H(+). The enzyme catalyses hydrogencarbonate + NH4(+) + 2 ATP = carbamoyl phosphate + 2 ADP + phosphate + 2 H(+). It participates in amino-acid biosynthesis; L-arginine biosynthesis; carbamoyl phosphate from bicarbonate: step 1/1. Its pathway is pyrimidine metabolism; UMP biosynthesis via de novo pathway; (S)-dihydroorotate from bicarbonate: step 1/3. In terms of biological role, large subunit of the glutamine-dependent carbamoyl phosphate synthetase (CPSase). CPSase catalyzes the formation of carbamoyl phosphate from the ammonia moiety of glutamine, carbonate, and phosphate donated by ATP, constituting the first step of 2 biosynthetic pathways, one leading to arginine and/or urea and the other to pyrimidine nucleotides. The large subunit (synthetase) binds the substrates ammonia (free or transferred from glutamine from the small subunit), hydrogencarbonate and ATP and carries out an ATP-coupled ligase reaction, activating hydrogencarbonate by forming carboxy phosphate which reacts with ammonia to form carbamoyl phosphate. This chain is Carbamoyl phosphate synthase large chain, found in Rhizobium meliloti (strain 1021) (Ensifer meliloti).